A 370-amino-acid chain; its full sequence is 3 beta-hydroxysteroid dehydrogenase/Delta 5--&gt;4-isomerase (370 aa).

Residue Tyr-158 is the Proton acceptor of the active site. Lys-162 contributes to the NAD(+) binding site.

The protein belongs to the 3-beta-HSD family. As to quaternary structure, monomer.

The protein localises to the cytoplasm. It carries out the reaction a 3beta-hydroxy-Delta(5)-steroid + NAD(+) = a 3-oxo-Delta(5)-steroid + NADH + H(+). The catalysed reaction is cholesterol + NAD(+) = cholest-5-en-3-one + NADH + H(+). It catalyses the reaction pregnenolone + NAD(+) = pregn-5-ene-3,20-dione + NADH + H(+). The enzyme catalyses 3beta-hydroxyandrost-5-en-17-one + NAD(+) = androst-5-ene-3,17-dione + NADH + H(+). It carries out the reaction a 3-oxo-Delta(5)-steroid = a 3-oxo-Delta(4)-steroid. The catalysed reaction is cholest-5-en-3-one = cholest-4-en-3-one. It catalyses the reaction pregn-5-ene-3,20-dione = progesterone. The enzyme catalyses androst-5-ene-3,17-dione = androst-4-ene-3,17-dione. Its pathway is lipid metabolism; steroid biosynthesis. Its function is as follows. 3-beta-HSD is a bifunctional enzyme, that catalyzes the oxidation and isomerization of cholesterol, pregnenolone, and dehydroepiandrosterone (DHEA) into cholest-4-en-3-one, progesterone, and androsterone, respectively. The polypeptide is 3 beta-hydroxysteroid dehydrogenase/Delta 5--&gt;4-isomerase (Mycobacterium tuberculosis (strain CDC 1551 / Oshkosh)).